The chain runs to 415 residues: Glutamyl-tRNA reductase (415 aa).

Residues 49 to 52 (TCNR), Ser-104, 109 to 111 (EPQ), and Gln-115 contribute to the substrate site. The Nucleophile role is filled by Cys-50. 184 to 189 (GAGEMI) is a binding site for NADP(+).

It belongs to the glutamyl-tRNA reductase family. Homodimer.

It carries out the reaction (S)-4-amino-5-oxopentanoate + tRNA(Glu) + NADP(+) = L-glutamyl-tRNA(Glu) + NADPH + H(+). It functions in the pathway porphyrin-containing compound metabolism; protoporphyrin-IX biosynthesis; 5-aminolevulinate from L-glutamyl-tRNA(Glu): step 1/2. Functionally, catalyzes the NADPH-dependent reduction of glutamyl-tRNA(Glu) to glutamate 1-semialdehyde (GSA). The chain is Glutamyl-tRNA reductase from Neisseria meningitidis serogroup C / serotype 2a (strain ATCC 700532 / DSM 15464 / FAM18).